We begin with the raw amino-acid sequence, 259 residues long: 2,3-dihydroxy-2,3-dihydro-p-cumate dehydrogenase (259 aa).

Position 18 to 42 (18 to 42 (VTGGAHGIGLGIVERLLGLGARVTA)) interacts with NAD(+). The active-site Proton acceptor is the tyrosine 163.

Belongs to the short-chain dehydrogenases/reductases (SDR) family.

It catalyses the reaction (2R,3S)-2,3-dihydroxy-2,3-dihydro-p-cumate + NAD(+) = 2,3-dihydroxy-p-cumate + NADH + H(+). It functions in the pathway aromatic compound metabolism; p-cumate degradation; acetaldehyde and pyruvate from p-cumate: step 2/7. The chain is 2,3-dihydroxy-2,3-dihydro-p-cumate dehydrogenase (cmtB) from Pseudomonas putida (strain ATCC 700007 / DSM 6899 / JCM 31910 / BCRC 17059 / LMG 24140 / F1).